The following is a 325-amino-acid chain: Probable NADH kinase (325 aa).

It belongs to the NAD kinase family. In terms of assembly, homodimer.

It localises to the cytoplasm. The catalysed reaction is NADH + ATP = ADP + NADPH + H(+). Its function is as follows. Key source of the cellular reductant NADPH which is an important antioxidant factor. The polypeptide is Probable NADH kinase (Oryza sativa subsp. japonica (Rice)).